The chain runs to 360 residues: N-acetylmuramoyl-L-alanine amidase CwlL (360 aa).

The first 39 residues, 1–39 (MVKVVKNFVKVNQYTRPGLKLAGVKGIVMHYTATPGASA), serve as a signal peptide directing secretion. An N-acetylmuramoyl-L-alanine amidase domain is found at 40–154 (LNERDYFNGT…DVTNKICPAP (115 aa)). 4 consecutive repeat copies span residues 166 to 191 (RKKV…SSKS), 196 to 259 (LKKG…EKAL), 265 to 289 (KKKK…KVKS), and 291 to 355 (LMKG…KAKL). 2 X approximate repeats regions lie at residues 166–289 (RKKV…KVKS) and 196–355 (LKKG…KAKL).

The protein belongs to the N-acetylmuramoyl-L-alanine amidase 2 family.

The protein resides in the secreted. It carries out the reaction Hydrolyzes the link between N-acetylmuramoyl residues and L-amino acid residues in certain cell-wall glycopeptides.. The polypeptide is N-acetylmuramoyl-L-alanine amidase CwlL (cwlL) (Bacillus licheniformis).